A 103-amino-acid chain; its full sequence is Large ribosomal subunit protein bL21 (103 aa).

Belongs to the bacterial ribosomal protein bL21 family. In terms of assembly, part of the 50S ribosomal subunit. Contacts protein L20.

Functionally, this protein binds to 23S rRNA in the presence of protein L20. This chain is Large ribosomal subunit protein bL21, found in Idiomarina loihiensis (strain ATCC BAA-735 / DSM 15497 / L2-TR).